A 708-amino-acid chain; its full sequence is Kelch-like protein 11 (708 aa).

An N-terminal signal peptide occupies residues 1–15; it reads MAAAAVAAAAAAAAA. The disordered stretch occupies residues 47–70; sequence DFGPGPGISAMEASGGDPGPEAED. Residues 94–170 enclose the BTB domain; sequence CDITLCFGGA…MYTGRIRVST (77 aa). Residues 205–307 form the BACK domain; the sequence is CVAIHSLAHM…KPTYLTRHVK (103 aa). Kelch repeat units follow at residues 360-407, 408-453, 455-501, 503-556, and 610-661; these read VIMV…VTES, YVYV…EVKG, LYSI…AIED, FVYI…VVNS, and DVFI…HVRI. Position 465 is a phosphoserine (S465).

As to quaternary structure, component of a cullin-RING-based BCR (BTB-CUL3-RBX1) E3 ubiquitin-protein ligase complex. Homodimer. Interacts with CUL3.

Component of a cullin-RING-based BCR (BTB-CUL3-RBX1) E3 ubiquitin-protein ligase complex that mediates the ubiquitination of target proteins, leading most often to their proteasomal degradation. The sequence is that of Kelch-like protein 11 (KLHL11) from Homo sapiens (Human).